Consider the following 370-residue polypeptide: Death-associated protein kinase 2 (370 aa).

The region spanning Tyr-23 to Ile-285 is the Protein kinase domain. Residues Leu-29 to Val-37 and Lys-52 contribute to the ATP site. Asp-149 functions as the Proton acceptor in the catalytic mechanism. The interval Gln-277 to Leu-344 is calmodulin-binding. The interval Gln-292–Val-301 is autoinhibitory domain. A Phosphoserine modification is found at Ser-299. Ser-318 carries the post-translational modification Phosphoserine; by autocatalysis. A disordered region spans residues Glu-348–Ser-370. Ser-349 bears the Phosphoserine mark. A compositionally biased stretch (basic residues) spans Arg-358 to Ser-370. Thr-369 carries the phosphothreonine; by PKB/AKT1 modification.

The protein belongs to the protein kinase superfamily. CAMK Ser/Thr protein kinase family. DAP kinase subfamily. In terms of assembly, homodimer in its autoinhibited state. Active as monomer. Isoform 2 but not isoform 1 can interact with ATF4. Interacts with 14-3-3 proteins YWHAB, YWHAE, YWHAG, YWHAH, YWHAQ, YWHAZ and SFN; the interaction requires DAPK2 phosphorylation at Thr-369 and suppresses DAPK2 kinase activity and DAPK2-induced apoptosis. Requires Mg(2+) as cofactor. Autophosphorylation at Ser-318 inhibits its catalytic activity. Dephosphorylated at Ser-318 in response to activated Fas and TNF-alpha receptors. Expressed in neutrophils and eosinophils. Isoform 2 is expressed in embryonic stem cells (at protein level). Isoform 1 is ubiquitously expressed in all tissue types examined with high levels in heart, lung and skeletal muscle.

The protein localises to the cytoplasm. Its subcellular location is the cytoplasmic vesicle. It is found in the autophagosome lumen. It carries out the reaction L-seryl-[protein] + ATP = O-phospho-L-seryl-[protein] + ADP + H(+). The enzyme catalyses L-threonyl-[protein] + ATP = O-phospho-L-threonyl-[protein] + ADP + H(+). Activated by Ca(2+)/calmodulin. Regulated by a double locking mechanism, involving autophosphorylation at Ser-318, calmodulin binding, and dimerization. In the inactive state, Ser-318 is phosphorylated, and the kinase is dimeric. Activation involves: dephosphorylation at Ser-318, release-of-autoinhibition mechanism where calmodulin binding induces a conformational change that relieves the steric block of the active site by the autoinhibitory domain, and generation of the monomeric active form of the kinase. Calcium/calmodulin-dependent serine/threonine kinase involved in multiple cellular signaling pathways that trigger cell survival, apoptosis, and autophagy. Regulates both type I apoptotic and type II autophagic cell death signals, depending on the cellular setting. The former is caspase-dependent, while the latter is caspase-independent and is characterized by the accumulation of autophagic vesicles. Acts as a mediator of anoikis and a suppressor of beta-catenin-dependent anchorage-independent growth of malignant epithelial cells. May play a role in granulocytic maturation. Regulates granulocytic motility by controlling cell spreading and polarization. Functionally, isoform 2 is not regulated by calmodulin. It can phosphorylate MYL9. It can induce membrane blebbing and autophagic cell death. This Homo sapiens (Human) protein is Death-associated protein kinase 2 (DAPK2).